The sequence spans 342 residues: Anthranilate phosphoribosyltransferase (342 aa).

Residues Gly-83, 86–87, Thr-91, 93–96, 111–119, and Ser-123 contribute to the 5-phospho-alpha-D-ribose 1-diphosphate site; these read GD, NIST, and KHGGRSVSS. An anthranilate-binding site is contributed by Gly-83. Residue Ser-95 coordinates Mg(2+). Arg-169 contacts anthranilate. Positions 228 and 229 each coordinate Mg(2+).

Belongs to the anthranilate phosphoribosyltransferase family. As to quaternary structure, homodimer. Requires Mg(2+) as cofactor.

The catalysed reaction is N-(5-phospho-beta-D-ribosyl)anthranilate + diphosphate = 5-phospho-alpha-D-ribose 1-diphosphate + anthranilate. Its pathway is amino-acid biosynthesis; L-tryptophan biosynthesis; L-tryptophan from chorismate: step 2/5. Its function is as follows. Catalyzes the transfer of the phosphoribosyl group of 5-phosphorylribose-1-pyrophosphate (PRPP) to anthranilate to yield N-(5'-phosphoribosyl)-anthranilate (PRA). This is Anthranilate phosphoribosyltransferase from Laribacter hongkongensis (strain HLHK9).